The chain runs to 434 residues: [Arg8]-vasotocin receptor (434 aa).

At 1–27 (MGRIANQTTASNDTDPFGRNEEVAKME) the chain is on the extracellular side. 2 N-linked (GlcNAc...) asparagine glycosylation sites follow: asparagine 6 and asparagine 12. A helical membrane pass occupies residues 28 to 48 (ITVLSVTFFVAVIGNLSVLLA). At 49-67 (MHNTKKKSSRMHLFIKHLS) the chain is on the cytoplasmic side. The helical transmembrane segment at 68–88 (LADMVVAFFQVLPQLCWEITF) threads the bilayer. Residues 89 to 98 (RFYGPDFLCR) lie on the Extracellular side of the membrane. Cysteine 97 and cysteine 176 are oxidised to a cystine. A helical membrane pass occupies residues 99–119 (IVKHLQVLGMFASTYMMVMMT). Over 120-141 (LDRYIAICHPLKTLQQPTQRAY) the chain is Cytoplasmic. The chain crosses the membrane as a helical span at residues 142–162 (IMIGSTWLCSLLLSTPQYFIF). Residues 163-191 (SLSEIQNGSYVYDCWGHFIEPWGIRAYIT) lie on the Extracellular side of the membrane. Residues 192-212 (WITVGIFLIPVIILMICYGFI) traverse the membrane as a helical segment. The Cytoplasmic segment spans residues 213-257 (CHSIWKNIKCKTMRGTRNTKDGMIGKVSVSSVTIISRAKLRTVKM). A helical transmembrane segment spans residues 258–278 (TLVIVLAYIVCWAPFFIVQMW). Over 279–295 (SVWDENFSWDDSENAAV) the chain is Extracellular. A helical transmembrane segment spans residues 296 to 316 (TLSALLASLNSCCNPWIYMLF). The Cytoplasmic segment spans residues 317-434 (SGHLLYDFLR…KSSQCMSKES (118 aa)).

It belongs to the G-protein coupled receptor 1 family. Vasopressin/oxytocin receptor subfamily. As to expression, expressed in pituitary, liver, gills, swim bladder and lateral line.

Its subcellular location is the cell membrane. Functionally, binds to vasotocin. Produces an induction of membrane chloride currents indicating that it is coupled to the inositol phosphate/calcium pathway. The protein is [Arg8]-vasotocin receptor of Catostomus commersonii (White sucker).